The sequence spans 403 residues: Odorant receptor 43b (403 aa).

Over 1-49 (MFGHFKLVYPAPISEPIQSRDSNAYMMETLRNSGLNLKNDFGIGRKIWR) the chain is Cytoplasmic. A helical transmembrane segment spans residues 50–70 (VFSFTYNMVILPVSFPINYVI). At 71-83 (HLAEFPPELLLQS) the chain is on the extracellular side. A helical transmembrane segment spans residues 84–104 (LQLCLNTWCFALKFFTLIVYT). Residues 105–139 (HRLELANKHFDELDKYCVKPAEKRKVRDMVATITR) are Cytoplasmic-facing. A helical membrane pass occupies residues 140–160 (LYLTFVVVYVLYATSTLLDGL). The Extracellular portion of the chain corresponds to 161-193 (LHHRVPYNTYYPFINWRVDRTQMYIQSFLEYFT). The chain crosses the membrane as a helical span at residues 194 to 214 (VGYAIYVATATDSYPVIYVAA). At 215-271 (LRTHILLLKDRIIYLGDPSNEGSSDPSYMFKSLVDCIKAHRTMLNFCDAIQPIISGT) the chain is on the cytoplasmic side. A helical membrane pass occupies residues 272 to 292 (IFAQFIICGSILGIIMINMVL). Over 293-299 (FADQSTR) the chain is Extracellular. Residues 300–320 (FGIVIYVMAVLLQTFPLCFYC) form a helical membrane-spanning segment. Residues 321–372 (NAIVDDCKELAHALFHSAWWVQDKRYQRTVIQFLQKLQQPMTFTAMNIFNIN) are Cytoplasmic-facing. The chain crosses the membrane as a helical span at residues 373–393 (LATNINVAKFAFTVYAIASGM). Residues 394 to 403 (NLDQKLSIKE) lie on the Extracellular side of the membrane.

This sequence belongs to the insect chemoreceptor superfamily. Heteromeric odorant receptor channel (TC 1.A.69) family. Or2a subfamily. In terms of assembly, interacts with Orco. Complexes exist early in the endomembrane system in olfactory sensory neurons (OSNs), coupling these complexes to the conserved ciliary trafficking pathway. In terms of tissue distribution, expressed in 16 olfactory receptor neurons in a broad area across the antenna, including both anterior and posterior faces and in the maxillary palp. This expression pattern matches the distribution of the small sensilla basiconica. Expression in the antenna is observed late in antennal development at 93 hours APF.

The protein localises to the cell membrane. Its function is as follows. Odorant receptor which mediates acceptance or avoidance behavior, depending on its substrates. The odorant receptor repertoire encodes a large collection of odor stimuli that vary widely in identity, intensity, and duration. May form a complex with Orco to form odorant-sensing units, providing sensitive and prolonged odorant signaling and calcium permeability. This is Odorant receptor 43b (Or43b) from Drosophila melanogaster (Fruit fly).